Consider the following 438-residue polypeptide: GTPase Der (438 aa).

2 consecutive EngA-type G domains span residues 4 to 168 (PVVA…DDNS) and 177 to 352 (TKVC…NNYS). GTP contacts are provided by residues 10-17 (GRANVGKS), 57-61 (DTGGL), 120-123 (NKID), 183-190 (GKPNVGKS), 230-234 (DTAGL), and 295-298 (NKWD). Residues 353–437 (MRISTGVLND…PLQFEFKTRG (85 aa)) enclose the KH-like domain.

The protein belongs to the TRAFAC class TrmE-Era-EngA-EngB-Septin-like GTPase superfamily. EngA (Der) GTPase family. In terms of assembly, associates with the 50S ribosomal subunit.

Its function is as follows. GTPase that plays an essential role in the late steps of ribosome biogenesis. The chain is GTPase Der from Finegoldia magna (strain ATCC 29328 / DSM 20472 / WAL 2508) (Peptostreptococcus magnus).